The sequence spans 149 residues: 3-hydroxyacyl-[acyl-carrier-protein] dehydratase FabZ (149 aa).

The active site involves His50.

It belongs to the thioester dehydratase family. FabZ subfamily.

It localises to the cytoplasm. It carries out the reaction a (3R)-hydroxyacyl-[ACP] = a (2E)-enoyl-[ACP] + H2O. Involved in unsaturated fatty acids biosynthesis. Catalyzes the dehydration of short chain beta-hydroxyacyl-ACPs and long chain saturated and unsaturated beta-hydroxyacyl-ACPs. The polypeptide is 3-hydroxyacyl-[acyl-carrier-protein] dehydratase FabZ (Pediococcus pentosaceus (strain ATCC 25745 / CCUG 21536 / LMG 10740 / 183-1w)).